A 33-amino-acid polypeptide reads, in one-letter code: LADDMPATMADQEVYRPEPEQIDSRNKYFSPRL.

A disordered region spans residues 1–33 (LADDMPATMADQEVYRPEPEQIDSRNKYFSPRL). A compositionally biased stretch (basic and acidic residues) spans 13-26 (EVYRPEPEQIDSRN). Leu-33 is modified (leucine amide).

Belongs to the pyrokinin family.

It is found in the secreted. Its function is as follows. Involved in the control of pheromone production in females. In Lymantria dispar (Gypsy moth), this protein is Pheromone biosynthesis-activating neuropeptide.